The following is a 244-amino-acid chain: 14-3-3 protein homolog 1 (244 aa).

Belongs to the 14-3-3 family.

The protein is 14-3-3 protein homolog 1 of Echinococcus multilocularis (Fox tapeworm).